The chain runs to 1154 residues: uncharacterized protein (1154 aa).

The first 18 residues, 1 to 18 (MKRNIFIKLLISLLLLSS), serve as a signal peptide directing secretion. Residue cysteine 19 is the site of N-palmitoyl cysteine attachment. Cysteine 19 is lipidated: S-diacylglycerol cysteine. Helical transmembrane passes span 288–308 (ISVSAILTLYIMFTGLSFLIG), 394–414 (LGFIYIILYLIALYFIFFLIF), 423–443 (ALITIGMMIIMGPIFICFMLF), and 458–478 (ISYALQPIILFAGIAFISMII).

The protein belongs to the TrbL/VirB6 family.

It localises to the cell membrane. This is an uncharacterized protein from Rickettsia typhi (strain ATCC VR-144 / Wilmington).